A 403-amino-acid polypeptide reads, in one-letter code: Tryptophan synthase beta chain (403 aa).

Position 96 is an N6-(pyridoxal phosphate)lysine (Lys96).

Belongs to the TrpB family. In terms of assembly, tetramer of two alpha and two beta chains. It depends on pyridoxal 5'-phosphate as a cofactor.

The enzyme catalyses (1S,2R)-1-C-(indol-3-yl)glycerol 3-phosphate + L-serine = D-glyceraldehyde 3-phosphate + L-tryptophan + H2O. It participates in amino-acid biosynthesis; L-tryptophan biosynthesis; L-tryptophan from chorismate: step 5/5. Functionally, the beta subunit is responsible for the synthesis of L-tryptophan from indole and L-serine. This chain is Tryptophan synthase beta chain, found in Ralstonia nicotianae (strain ATCC BAA-1114 / GMI1000) (Ralstonia solanacearum).